We begin with the raw amino-acid sequence, 44 residues long: Non-structural protein 7b (44 aa).

The helical transmembrane segment at 9–29 threads the bilayer; sequence FYLCFLAFLLFLVLIMLIIFW.

The protein localises to the host membrane. The polypeptide is Non-structural protein 7b (Bat coronavirus Rp3/2004 (BtCoV/Rp3/2004)).